Reading from the N-terminus, the 155-residue chain is Protein LOL2 (155 aa).

Met-1 carries the post-translational modification N-acetylmethionine. Residues 1–35 (MEEIQQQTQKEEQKHREEEEEEEEGPPPGWESAVL) are disordered. Putative zinc finger stretches follow at residues 60–90 (QMVC…VNLV) and 98–128 (QVNC…VTDI). Residues 130-155 (ENNKRPPWSEQQGPLKSLSSLRRAEN) form a disordered region. Residues 138-149 (SEQQGPLKSLSS) are compositionally biased toward polar residues.

The protein localises to the nucleus. In terms of biological role, putative zinc finger that may be involved in programmed cell death and defense response. This Arabidopsis thaliana (Mouse-ear cress) protein is Protein LOL2 (LOL2).